Consider the following 662-residue polypeptide: Glutathione hydrolase 7 (662 aa).

Residues 1 to 106 (MAAENEASQE…ASECSCRQDG (106 aa)) lie on the Cytoplasmic side of the membrane. Residues Ser17, Ser72, Ser79, and Ser83 each carry the phosphoserine modification. The disordered stretch occupies residues 26 to 90 (SFPRLPEDEP…DGSPLRETRK (65 aa)). Low complexity predominate over residues 72–83 (SSSSEMGSQDGS). The chain crosses the membrane as a helical; Signal-anchor for type II membrane protein span at residues 107-127 (LTVIVTACLTFATGVTVALIM). Residues 128–662 (QIYFGDPQIF…SPDAAGATIL (535 aa)) lie on the Extracellular side of the membrane. N-linked (GlcNAc...) asparagine glycosylation is found at Asn198, Asn267, Asn283, Asn330, Asn353, Asn394, Asn452, Asn519, and Asn586.

It belongs to the gamma-glutamyltransferase family. Heterodimer composed of the light and heavy chains. The active site is located in the light chain. In terms of processing, cleaved by autocatalysis into a large and a small subunit and the autocatalytic cleavage is essential to the functional activation of the enzyme.

It is found in the membrane. It catalyses the reaction an N-terminal (5-L-glutamyl)-[peptide] + an alpha-amino acid = 5-L-glutamyl amino acid + an N-terminal L-alpha-aminoacyl-[peptide]. The catalysed reaction is glutathione + H2O = L-cysteinylglycine + L-glutamate. It carries out the reaction an S-substituted glutathione + H2O = an S-substituted L-cysteinylglycine + L-glutamate. Its pathway is sulfur metabolism; glutathione metabolism. In terms of biological role, hydrolyzes and transfers gamma-glutamyl moieties from glutathione and other gamma-glutamyl compounds to acceptors. The sequence is that of Glutathione hydrolase 7 from Bos taurus (Bovine).